The sequence spans 218 residues: Large ribosomal subunit protein bL25 (218 aa).

Disordered regions lie at residues 1-20 (MKTH…GPAR) and 185-218 (PTAA…ASEE). Residues 192-218 (EEGEEGEEGEEGGEGGEAEGAEAASEE) are compositionally biased toward acidic residues.

This sequence belongs to the bacterial ribosomal protein bL25 family. CTC subfamily. In terms of assembly, part of the 50S ribosomal subunit; part of the 5S rRNA/L5/L18/L25 subcomplex. Contacts the 5S rRNA. Binds to the 5S rRNA independently of L5 and L18.

In terms of biological role, this is one of the proteins that binds to the 5S RNA in the ribosome where it forms part of the central protuberance. This chain is Large ribosomal subunit protein bL25, found in Desulfatibacillum aliphaticivorans.